Consider the following 196-residue polypeptide: Holliday junction branch migration complex subunit RuvA (196 aa).

The segment at 1–62 is domain I; that stretch reads MYEYINGLIT…ENEMTLYGFI (62 aa). A domain II region spans residues 63-141; the sequence is DENEKYLFNK…DLALSAGMTV (79 aa). The segment at 142–146 is flexible linker; it reads ETVPT. The tract at residues 147–196 is domain III; it reads TDNQALADALAALESLGYSAKDVAKLQTVLANQKDTTDGYIRSALKFLVK.

This sequence belongs to the RuvA family. In terms of assembly, homotetramer. Forms an RuvA(8)-RuvB(12)-Holliday junction (HJ) complex. HJ DNA is sandwiched between 2 RuvA tetramers; dsDNA enters through RuvA and exits via RuvB. An RuvB hexamer assembles on each DNA strand where it exits the tetramer. Each RuvB hexamer is contacted by two RuvA subunits (via domain III) on 2 adjacent RuvB subunits; this complex drives branch migration. In the full resolvosome a probable DNA-RuvA(4)-RuvB(12)-RuvC(2) complex forms which resolves the HJ.

It is found in the cytoplasm. Functionally, the RuvA-RuvB-RuvC complex processes Holliday junction (HJ) DNA during genetic recombination and DNA repair, while the RuvA-RuvB complex plays an important role in the rescue of blocked DNA replication forks via replication fork reversal (RFR). RuvA specifically binds to HJ cruciform DNA, conferring on it an open structure. The RuvB hexamer acts as an ATP-dependent pump, pulling dsDNA into and through the RuvAB complex. HJ branch migration allows RuvC to scan DNA until it finds its consensus sequence, where it cleaves and resolves the cruciform DNA. The sequence is that of Holliday junction branch migration complex subunit RuvA from Leuconostoc citreum (strain KM20).